Here is a 398-residue protein sequence, read N- to C-terminus: Tryptophan synthase beta chain (398 aa).

An N6-(pyridoxal phosphate)lysine modification is found at Lys88.

This sequence belongs to the TrpB family. As to quaternary structure, tetramer of two alpha and two beta chains. Pyridoxal 5'-phosphate serves as cofactor.

The catalysed reaction is (1S,2R)-1-C-(indol-3-yl)glycerol 3-phosphate + L-serine = D-glyceraldehyde 3-phosphate + L-tryptophan + H2O. It participates in amino-acid biosynthesis; L-tryptophan biosynthesis; L-tryptophan from chorismate: step 5/5. Functionally, the beta subunit is responsible for the synthesis of L-tryptophan from indole and L-serine. This Actinobacillus succinogenes (strain ATCC 55618 / DSM 22257 / CCUG 43843 / 130Z) protein is Tryptophan synthase beta chain.